Here is a 69-residue protein sequence, read N- to C-terminus: uncharacterized protein (69 aa).

This is an uncharacterized protein from Vaccinia virus (strain Western Reserve) (VACV).